We begin with the raw amino-acid sequence, 431 residues long: Light-independent protochlorophyllide reductase subunit N (431 aa).

Cys29, Cys54, and Cys114 together coordinate [4Fe-4S] cluster.

The protein belongs to the BchN/ChlN family. In terms of assembly, protochlorophyllide reductase is composed of three subunits; ChlL, ChlN and ChlB. Forms a heterotetramer of two ChlB and two ChlN subunits. Requires [4Fe-4S] cluster as cofactor.

The protein resides in the plastid. Its subcellular location is the chloroplast. The enzyme catalyses chlorophyllide a + oxidized 2[4Fe-4S]-[ferredoxin] + 2 ADP + 2 phosphate = protochlorophyllide a + reduced 2[4Fe-4S]-[ferredoxin] + 2 ATP + 2 H2O. It functions in the pathway porphyrin-containing compound metabolism; chlorophyll biosynthesis (light-independent). Component of the dark-operative protochlorophyllide reductase (DPOR) that uses Mg-ATP and reduced ferredoxin to reduce ring D of protochlorophyllide (Pchlide) to form chlorophyllide a (Chlide). This reaction is light-independent. The NB-protein (ChlN-ChlB) is the catalytic component of the complex. The polypeptide is Light-independent protochlorophyllide reductase subunit N (Nephroselmis olivacea (Green alga)).